A 109-amino-acid chain; its full sequence is Spermidine export protein MdtI (109 aa).

The next 4 membrane-spanning stretches (helical) occupy residues 6-26, 36-56, 64-84, and 88-108; these read WIHA…NVFL, WFGL…SQAV, AYAL…WVLF, and LNRK…MIKL.

Belongs to the drug/metabolite transporter (DMT) superfamily. Small multidrug resistance (SMR) (TC 2.A.7.1) family. MdtI subfamily. In terms of assembly, forms a complex with MdtJ.

The protein resides in the cell inner membrane. Functionally, catalyzes the excretion of spermidine. This Enterobacter sp. (strain 638) protein is Spermidine export protein MdtI.